The chain runs to 303 residues: E3 ubiquitin-protein ligase SINA-like 3 (303 aa).

Residues 1 to 30 are disordered; sequence MENITNNSERSLDRPKRQRPVSMENVGGTA. The RING-type zinc-finger motif lies at 49–85; the sequence is CPICYHKLGAPIYQCDNGHIACSSCCKKVKYKCPYCS. Positions 99–286 are SBD; that stretch reads IVEAVVVSCP…MSIPYYLLDE (188 aa). The SIAH-type zinc-finger motif lies at 102–162; the sequence is AVVVSCPNAK…LYRHYHAEHK (61 aa). Zn(2+) contacts are provided by Cys107, Cys114, His128, Cys132, Cys139, Cys144, His156, and His161.

This sequence belongs to the SINA (Seven in absentia) family.

The catalysed reaction is S-ubiquitinyl-[E2 ubiquitin-conjugating enzyme]-L-cysteine + [acceptor protein]-L-lysine = [E2 ubiquitin-conjugating enzyme]-L-cysteine + N(6)-ubiquitinyl-[acceptor protein]-L-lysine.. It functions in the pathway protein modification; protein ubiquitination. In terms of biological role, E3 ubiquitin-protein ligase that mediates ubiquitination and subsequent proteasomal degradation of target proteins. E3 ubiquitin ligases accept ubiquitin from an E2 ubiquitin-conjugating enzyme in the form of a thioester and then directly transfers the ubiquitin to targeted substrates. It probably triggers the ubiquitin-mediated degradation of different substrates. The chain is E3 ubiquitin-protein ligase SINA-like 3 from Arabidopsis thaliana (Mouse-ear cress).